Reading from the N-terminus, the 198-residue chain is Imidazoleglycerol-phosphate dehydratase (198 aa).

Belongs to the imidazoleglycerol-phosphate dehydratase family.

The protein localises to the cytoplasm. The enzyme catalyses D-erythro-1-(imidazol-4-yl)glycerol 3-phosphate = 3-(imidazol-4-yl)-2-oxopropyl phosphate + H2O. It functions in the pathway amino-acid biosynthesis; L-histidine biosynthesis; L-histidine from 5-phospho-alpha-D-ribose 1-diphosphate: step 6/9. This chain is Imidazoleglycerol-phosphate dehydratase, found in Methylobacillus flagellatus (strain ATCC 51484 / DSM 6875 / VKM B-1610 / KT).